The primary structure comprises 103 residues: GIDPNYRTSKPVVGDHSGHKIYGPVESPKVLGVHGTIVGVDFDLCIADGSCITACPVNVFQWYETPGHPASEKKADPVNEQACIFCMACVNVCPVAAIDVKPP.

Residues 1-36 form an N-terminal extension region; sequence GIDPNYRTSKPVVGDHSGHKIYGPVESPKVLGVHGT. Residue histidine 19 coordinates Zn(2+). Lysine 29 carries the post-translational modification N6-methyllysine. Position 34 (histidine 34) interacts with Zn(2+). 4Fe-4S ferredoxin-type domains are found at residues 35-65 and 74-103; these read GTIV…WYET and KADP…VKPP. [3Fe-4S] cluster-binding residues include cysteine 45 and cysteine 51. A [4Fe-4S] cluster-binding site is contributed by cysteine 55. Aspartate 76 lines the Zn(2+) pocket. Residues cysteine 83, cysteine 86, and cysteine 89 each contribute to the [4Fe-4S] cluster site. Cysteine 93 is a [3Fe-4S] cluster binding site.

[3Fe-4S] cluster serves as cofactor. [4Fe-4S] cluster is required as a cofactor. The cofactor is Zn(2+).

Ferredoxins are iron-sulfur proteins that transfer electrons in a wide variety of metabolic reactions. The polypeptide is Zinc-containing ferredoxin (zfx) (Sulfolobus acidocaldarius (strain ATCC 33909 / DSM 639 / JCM 8929 / NBRC 15157 / NCIMB 11770)).